A 691-amino-acid polypeptide reads, in one-letter code: Elongation factor G (691 aa).

The region spanning 8-282 (ERVRNIGIAA…AVVDYLPAPV (275 aa)) is the tr-type G domain. GTP-binding positions include 17-24 (AHIDAGKT), 81-85 (DTPGH), and 135-138 (NKMD).

This sequence belongs to the TRAFAC class translation factor GTPase superfamily. Classic translation factor GTPase family. EF-G/EF-2 subfamily.

The protein resides in the cytoplasm. Its function is as follows. Catalyzes the GTP-dependent ribosomal translocation step during translation elongation. During this step, the ribosome changes from the pre-translocational (PRE) to the post-translocational (POST) state as the newly formed A-site-bound peptidyl-tRNA and P-site-bound deacylated tRNA move to the P and E sites, respectively. Catalyzes the coordinated movement of the two tRNA molecules, the mRNA and conformational changes in the ribosome. The chain is Elongation factor G from Prochlorococcus marinus (strain AS9601).